Consider the following 246-residue polypeptide: UPF0246 protein stu1967 (246 aa).

Belongs to the UPF0246 family.

The polypeptide is UPF0246 protein stu1967 (Streptococcus thermophilus (strain ATCC BAA-250 / LMG 18311)).